The sequence spans 312 residues: DNA-directed RNA polymerase subunit alpha (312 aa).

The segment at 1 to 226 is alpha N-terminal domain (alpha-NTD); it reads MIEFEKPNIT…EHFKVFMSTD (226 aa). Residues 243–312 are alpha C-terminal domain (alpha-CTD); the sequence is NEKKLEMTIE…ELGLSLRQDD (70 aa).

It belongs to the RNA polymerase alpha chain family. In terms of assembly, homodimer. The RNAP catalytic core consists of 2 alpha, 1 beta, 1 beta' and 1 omega subunit. When a sigma factor is associated with the core the holoenzyme is formed, which can initiate transcription.

The enzyme catalyses RNA(n) + a ribonucleoside 5'-triphosphate = RNA(n+1) + diphosphate. Functionally, DNA-dependent RNA polymerase catalyzes the transcription of DNA into RNA using the four ribonucleoside triphosphates as substrates. The chain is DNA-directed RNA polymerase subunit alpha from Lactobacillus gasseri (strain ATCC 33323 / DSM 20243 / BCRC 14619 / CIP 102991 / JCM 1131 / KCTC 3163 / NCIMB 11718 / NCTC 13722 / AM63).